Here is a 403-residue protein sequence, read N- to C-terminus: Phosphopentomutase (403 aa).

Residues Asp13, Asp298, His303, Asp339, His340, and His351 each contribute to the Mn(2+) site.

The protein belongs to the phosphopentomutase family. The cofactor is Mn(2+).

It is found in the cytoplasm. The enzyme catalyses 2-deoxy-alpha-D-ribose 1-phosphate = 2-deoxy-D-ribose 5-phosphate. The catalysed reaction is alpha-D-ribose 1-phosphate = D-ribose 5-phosphate. The protein operates within carbohydrate degradation; 2-deoxy-D-ribose 1-phosphate degradation; D-glyceraldehyde 3-phosphate and acetaldehyde from 2-deoxy-alpha-D-ribose 1-phosphate: step 1/2. In terms of biological role, isomerase that catalyzes the conversion of deoxy-ribose 1-phosphate (dRib-1-P) and ribose 1-phosphate (Rib-1-P) to deoxy-ribose 5-phosphate (dRib-5-P) and ribose 5-phosphate (Rib-5-P), respectively. This Streptococcus mutans serotype c (strain ATCC 700610 / UA159) protein is Phosphopentomutase.